Here is a 56-residue protein sequence, read N- to C-terminus: Ovomucoid (56 aa).

Positions 6–56 constitute a Kazal-like domain; sequence VDCSDHPKPACLQEQKPICGSDNKTYDNKCSFCNAVVDSNGTLTLSHFGKC. Cystine bridges form between Cys-8–Cys-38, Cys-16–Cys-35, and Cys-24–Cys-56. N-linked (GlcNAc...) asparagine glycosylation occurs at Asn-45.

The protein resides in the secreted. This is Ovomucoid from Ortalis vetula (Plain chachalaca).